We begin with the raw amino-acid sequence, 477 residues long: Cysteine--tRNA ligase (477 aa).

C28 lines the Zn(2+) pocket. The short motif at 30–40 is the 'HIGH' region element; it reads PTVYDYPHLGH. 3 residues coordinate Zn(2+): C208, H233, and E237. The 'KMSKS' region signature appears at 265–269; that stretch reads KMSKS. ATP is bound at residue K268.

Belongs to the class-I aminoacyl-tRNA synthetase family. It depends on Zn(2+) as a cofactor.

The protein localises to the cytoplasm. The enzyme catalyses tRNA(Cys) + L-cysteine + ATP = L-cysteinyl-tRNA(Cys) + AMP + diphosphate. This Pyrococcus furiosus (strain ATCC 43587 / DSM 3638 / JCM 8422 / Vc1) protein is Cysteine--tRNA ligase.